We begin with the raw amino-acid sequence, 167 residues long: Histidinol dehydrogenase (167 aa).

2 residues coordinate Zn(2+): glutamine 109 and histidine 112.

It belongs to the histidinol dehydrogenase family. Homodimer. Zn(2+) serves as cofactor.

The enzyme catalyses L-histidinol + 2 NAD(+) + H2O = L-histidine + 2 NADH + 3 H(+). The protein operates within amino-acid biosynthesis; L-histidine biosynthesis; L-histidine from 5-phospho-alpha-D-ribose 1-diphosphate: step 9/9. In terms of biological role, catalyzes the sequential NAD-dependent oxidations of L-histidinol to L-histidinaldehyde and then to L-histidine. This Salmonella enteritidis protein is Histidinol dehydrogenase (hisD).